A 555-amino-acid polypeptide reads, in one-letter code: MPYIITQSCCNDGSCVFACPVNCIHPTPDEPGFATSEMLYIDPVACVDCGACVSACPVGAIASDTRLAPKQLPFIEINASYYPARPIDLKLPPTSKLAPVIPAAQVHVRRRPLTVAIVGSGPAAMYAADELLTQPGVWVNVFEKLPTPYGLVRAGLAPDHQNTKKVTELFDRVAEHRRFRFFLNVEIGRHLSHDELLAHHHAVLYAVGAPDDRRLNIDGMGIPGTGTATELVAWINAHPDFAYLPVDLSHERVVVIGNGNVALDVARLLTADPDNLARTDISEFALHVLGGSAVREVVVAARRGPAHSAFTLPELIGLKATSEVVLDAGDRKLVEGDFATVSDSLTRKKLEVLSSLVDSSKPTSRRRIRLAYQLTPKRVLGNQRATGVEFSVTGTEESRRFDAGLVLTSVGYRGKRIRDLPFDEEAAVIPNDGGRVVDPSRGRPMPGAYVAGWIKRGPTGFIGTNKLCSVQTVQAVVADFNAGWLTDPVAEPAELAKLVHARQPDTVDSVGWRAIDAAEIAQGSTEGRPRRKFTDVADMLAVAAGAPPLRLRALS.

4Fe-4S ferredoxin-type domains lie at P2–D29 and E37–R66. Positions 9, 15, 19, 46, 49, 52, and 56 each coordinate [4Fe-4S] cluster. Residues V115–S555 are ferredoxin--NADP reductase. FAD contacts are provided by A123, E143, L151, and I187. NADP(+) contacts are provided by residues R213, N258 to V261, R302 to R303, and E314. FAD-binding positions include W453 and G460–I462. Residue G460 coordinates NADP(+).

This sequence in the C-terminal section; belongs to the ferredoxin--NADP reductase family. Requires [4Fe-4S] cluster as cofactor. FAD is required as a cofactor.

The enzyme catalyses 2 reduced [2Fe-2S]-[ferredoxin] + NADP(+) + H(+) = 2 oxidized [2Fe-2S]-[ferredoxin] + NADPH. The chain is Probable ferredoxin/ferredoxin--NADP reductase (fprB) from Mycobacterium leprae (strain TN).